Reading from the N-terminus, the 252-residue chain is Phosphomannomutase (252 aa).

The active-site Nucleophile is the aspartate 13. The Mg(2+) site is built by aspartate 13 and aspartate 15. Residue aspartate 15 is the Proton donor/acceptor of the active site. Positions 22, 124, 135, 142, 180, and 182 each coordinate alpha-D-mannose 1-phosphate. Positions 208, 220, and 225 each coordinate Mg(2+).

The protein belongs to the eukaryotic PMM family. In terms of assembly, homodimer. Mg(2+) is required as a cofactor. As to expression, expressed in roots, stems, leaves, flowers and immature fruits.

It is found in the cytoplasm. The catalysed reaction is alpha-D-mannose 1-phosphate = D-mannose 6-phosphate. The protein operates within nucleotide-sugar biosynthesis; GDP-alpha-D-mannose biosynthesis; alpha-D-mannose 1-phosphate from D-fructose 6-phosphate: step 2/2. Catalyzes the interconversion of mannose-6-phosphate to mannose-1-phosphate, the precursor for the synthesis of GDP-mannose. GDP-mannose is an essential sugar nucleotide for the synthesis of D-mannose-containing cell wall polysaccharides (galactomannans and glucomannans), glycolipids, glycoproteins and the antioxidant L-ascorbate. Can complement the yeast temperature-sensitive mutant sec53-6. This Nicotiana benthamiana protein is Phosphomannomutase.